Reading from the N-terminus, the 1135-residue chain is MVDLESEVPPLPPRYRFRDLLLGDQGWQNDDRVQVEFYMNENTFKERLKLFFIKNQRSSLRIRLFNFSLKLLSCLLYIIRVLLENPSQGNEWSHIFWVNRSLPLWGLQVSVALISLFETILLGYLSYKGNIWEQILRIPFILEIINAVPFIISIFWPSLRNLFVPVFLNCWLAKHALENMINDLHRAIQRTQSAMFNQVLILISTLLCLIFTCICGIQHLERIGKKLNLFDSLYFCIVTFSTVGFGDVTPETWSSKLFVVAMICVALVVLPIQFEQLAYLWMERQKSGGNYSRHRAQTEKHVVLCVSSLKIDLLMDFLNEFYAHPRLQDYYVVILCPTEMDVQVRRVLQIPMWSQRVIYLQGSALKDQDLLRAKMDDAEACFILSSRCEVDRTSSDHQTILRAWAVKDFAPNCPLYVQILKPENKFHIKFADHVVCEEEFKYAMLALNCICPATSTLITLLVHTSRGQEGQQSPEQWQKMYGRCSGNEVYHIVLEESTFFAEYEGKSFTYASFHAHKKFGVCLIGVRREDNKNILLNPGPRYIMNSTDICFYINITKEENSAFKNQDQQRKSNVSRSFYHGPSRLPVHSIIASMGTVAIDLQDTSCRSASGPTLSLPTEGSKEIRRPSIAPVLEVADTSSIQTCDLLSDQSEDETTPDEEMSSNLEYAKGYPPYSPYIGSSPTFCHLLHEKVPFCCLRLDKSCQHNYYEDAKAYGFKNKLIIVAAETAGNGLYNFIVPLRAYYRPKKELNPIVLLLDNPPDMHFLDAICWFPMVYYMVGSIDNLDDLLRCGVTFAANMVVVDKESTMSAEEDYMADAKTIVNVQTLFRLFSSLSIITELTHPANMRFMQFRAKDCYSLALSKLEKKERERGSNLAFMFRLPFAAGRVFSISMLDTLLYQSFVKDYMISITRLLLGLDTTPGSGFLCSMKITADDLWIRTYARLYQKLCSSTGDVPIGIYRTESQKLTTSESQISISVEEWEDTKDSKEQGHHRSNHRNSTSSDQSDHPLLRRKSMQWARRLSRKGPKHSGKTAEKITQQRLNLYRRSERQELAELVKNRMKHLGLSTVGYDEMNDHQSTLSYILINPSPDTRIELNDVVYLIRPDPLAYLPNSEPSRRNSICNVTGQDSREETQL.

Residues 1 to 63 lie on the Cytoplasmic side of the membrane; it reads MVDLESEVPP…KNQRSSLRIR (63 aa). The helical transmembrane segment at 64–84 threads the bilayer; that stretch reads LFNFSLKLLSCLLYIIRVLLE. At 85 to 101 the chain is on the extracellular side; sequence NPSQGNEWSHIFWVNRS. An N-linked (GlcNAc...) asparagine glycan is attached at asparagine 99. A helical membrane pass occupies residues 102–122; sequence LPLWGLQVSVALISLFETILL. The Cytoplasmic portion of the chain corresponds to 123-137; the sequence is GYLSYKGNIWEQILR. A helical membrane pass occupies residues 138–158; the sequence is IPFILEIINAVPFIISIFWPS. The Extracellular segment spans residues 159–164; that stretch reads LRNLFV. A helical transmembrane segment spans residues 165–185; that stretch reads PVFLNCWLAKHALENMINDLH. At 186–198 the chain is on the cytoplasmic side; sequence RAIQRTQSAMFNQ. The helical transmembrane segment at 199–219 threads the bilayer; it reads VLILISTLLCLIFTCICGIQH. The Extracellular segment spans residues 220 to 228; it reads LERIGKKLN. An intramembrane region (pore-forming) is located at residues 229 to 249; that stretch reads LFDSLYFCIVTFSTVGFGDVT. At 250 to 256 the chain is on the extracellular side; sequence PETWSSK. Residues 257-277 traverse the membrane as a helical segment; the sequence is LFVVAMICVALVVLPIQFEQL. Topologically, residues 278–1135 are cytoplasmic; that stretch reads AYLWMERQKS…GQDSREETQL (858 aa). RCK N-terminal domains are found at residues 299–435 and 718–858; these read EKHV…DHVV and NKLI…CYSL. 3 disordered regions span residues 977–1010, 1017–1036, and 1113–1135; these read VEEW…HPLL, WARR…AEKI, and SEPS…ETQL. The span at 1017–1030 shows a compositional bias: basic residues; that stretch reads WARRLSRKGPKHSG. The segment covering 1118–1127 has biased composition (polar residues); sequence RNSICNVTGQ.

It belongs to the potassium channel family. Calcium-activated (TC 1.A.1.3) subfamily. KCa4.2/KCNT2 sub-subfamily. In terms of assembly, homotetramer. Forms heteromeric channels with KCNT1; these heterodimer channels differ from the homomers in their unitary conductance, kinetic behavior, subcellular localization, and response to activation of protein kinase C. Phosphorylated by protein kinase C. Phosphorylation of the C-terminal domain inhibits channel activity.

Its subcellular location is the cell membrane. It catalyses the reaction K(+)(in) = K(+)(out). With respect to regulation, are normally in a closed state unless activated by an increase in intracellular Na(+) and Cl(-). Inhibited upon stimulation of G-protein coupled receptors, such as CHRM1 and GRM1. There is conflicting data about the effect of ATP on KNCT2 channels activity. Intracellular ATP was initially report to inhibit the channel activity. However, others studies conclude that KNCT2 channels are not inhibited by intracellular ATP. Functionally, sodium-activated and chloride-activated potassium channel. Produces rapidly activating outward rectifier K(+) currents. Contributes to regulate neuronal excitability. The sequence is that of Potassium channel subfamily T member 2 (KCNT2) from Homo sapiens (Human).